A 33-amino-acid chain; its full sequence is Photosystem II reaction center protein Psb30 (33 aa).

The helical transmembrane segment at 5–25 (VIAQPIVLGLIVASGPLVIVS) threads the bilayer.

This sequence belongs to the Psb30/Ycf12 family. As to quaternary structure, PSII is composed of 1 copy each of membrane proteins PsbA, PsbB, PsbC, PsbD, PsbE, PsbF, PsbH, PsbI, PsbJ, PsbK, PsbL, PsbM, PsbT, PsbX, PsbY, PsbZ, Psb30/Ycf12, peripheral proteins of the oxygen-evolving complex and a large number of cofactors. It forms dimeric complexes.

It is found in the plastid membrane. In terms of biological role, a core subunit of photosystem II (PSII), probably helps stabilize the reaction center. The protein is Photosystem II reaction center protein Psb30 of Aneura mirabilis (Parasitic liverwort).